The chain runs to 171 residues: AN1-type zinc finger protein 2A (171 aa).

2 consecutive AN1-type zinc fingers follow at residues 4 to 52 and 94 to 142; these read PDLG…KKDV and KVFT…SSVS. Residues Cys10, Cys15, Cys25, Cys28, Cys33, His36, His42, Cys44, Cys100, Cys105, Cys115, Cys118, Cys123, His126, His132, and Cys134 each contribute to the Zn(2+) site. Positions 135 to 171 are disordered; the sequence is QAGSSSVSRGRSSASRAAEQKPSGVSWLAQRLRRTVK. Over residues 136–151 the composition is skewed to low complexity; that stretch reads AGSSSVSRGRSSASRA.

It localises to the cytoplasm. The protein resides in the nucleus. The chain is AN1-type zinc finger protein 2A (Zfand2a) from Rattus norvegicus (Rat).